The following is a 275-amino-acid chain: NAD(P)H-hydrate epimerase (275 aa).

Residues 49-258 enclose the YjeF N-terminal domain; it reads AIKIDQELFS…ALAAKYELNL (210 aa). 102-106 is a (6S)-NADPHX binding site; the sequence is NNGGD. Residues N103 and D167 each contribute to the K(+) site. Residues 171 to 177 and D200 each bind (6S)-NADPHX; that span reads GFSFKPP. Position 203 (S203) interacts with K(+).

The protein belongs to the NnrE/AIBP family. Requires K(+) as cofactor.

The enzyme catalyses (6R)-NADHX = (6S)-NADHX. It catalyses the reaction (6R)-NADPHX = (6S)-NADPHX. In terms of biological role, catalyzes the epimerization of the S- and R-forms of NAD(P)HX, a damaged form of NAD(P)H that is a result of enzymatic or heat-dependent hydration. This is a prerequisite for the S-specific NAD(P)H-hydrate dehydratase to allow the repair of both epimers of NAD(P)HX. This Ixodes scapularis (Black-legged tick) protein is NAD(P)H-hydrate epimerase.